A 347-amino-acid polypeptide reads, in one-letter code: DNA polymerase III subunit delta (347 aa).

The protein belongs to the DNA polymerase HolA subunit family. In terms of assembly, component of the DNA clamp loading complex consisting of tau(3):delta(1):delta'(1). The DNA polymerase III holoenzyme complex contains at least 10 different subunits organized into 3 functionally essential subassemblies: the Pol III core, the beta sliding clamp processivity factor and the clamp-loading complex. The Pol III core (subunits alpha, epsilon and theta) contains the polymerase and the 3'-5' exonuclease proofreading activities. The polymerase is tethered to the template via the dimeric beta sliding clamp processivity factor. The DNA clamp-loading complex assembles the beta sliding clamp onto the primed template and plays a central role in the organization and communication at the replication fork.

The protein localises to the cytoplasm. The protein resides in the nucleoid. It catalyses the reaction DNA(n) + a 2'-deoxyribonucleoside 5'-triphosphate = DNA(n+1) + diphosphate. Functionally, part of the beta sliding clamp loading complex, which hydrolyzes ATP to load the beta clamp onto primed DNA to form the DNA replication pre-initiation complex. DNA polymerase III is a complex, multichain enzyme responsible for most of the replicative synthesis in bacteria. This DNA polymerase also exhibits 3'-5' exonuclease activity. The delta subunit is the wrench that will open the beta subunit dimer. The DNA clamp loading complex (tau(3),delta,delta') is thought to load beta dimers onto DNA by binding ATP which alters the complex's conformation so it can bind beta sliding clamp dimers and open them at one interface. Primed DNA is recognized, ATP is hydrolyzed releasing the clamp loading complex and closing the beta sliding clamp ring around the primed DNA. The sequence is that of DNA polymerase III subunit delta from Bacillus subtilis (strain 168).